A 102-amino-acid chain; its full sequence is MENLQKMISEKSVVIFSKNSCCMSHTIKTLFLDFGVNPTIYELDEINIGREIEQALAQLGCSPTVPVVFIGGQLVGGANQVMSLHLNRSLVPMLKRAGALWL.

Positions 1–101 (MENLQKMISE…PMLKRAGALW (101 aa)) constitute a Glutaredoxin domain. Cys-21 provides a ligand contact to [2Fe-2S] cluster. The Responsive for interaction with TGA factors signature appears at 99-102 (ALWL).

The protein belongs to the glutaredoxin family. CC-type subfamily.

Its subcellular location is the cytoplasm. The protein localises to the nucleus. Functionally, may only reduce GSH-thiol disulfides, but not protein disulfides. In Arabidopsis thaliana (Mouse-ear cress), this protein is Monothiol glutaredoxin-S5 (GRXS5).